We begin with the raw amino-acid sequence, 238 residues long: Small ribosomal subunit protein uS2 (238 aa).

This sequence belongs to the universal ribosomal protein uS2 family.

The chain is Small ribosomal subunit protein uS2 from Chloroflexus aurantiacus (strain ATCC 29366 / DSM 635 / J-10-fl).